Here is a 501-residue protein sequence, read N- to C-terminus: Protein disulfide isomerase-like 1-1 (501 aa).

A signal peptide spans 1–23 (MAMRGFTLFSILVLSLCASSIRS). In terms of domain architecture, Thioredoxin 1 spans 24-141 (EETETKEFVL…IVTYLKKQSG (118 aa)). N39 carries N-linked (GlcNAc...) asparagine glycosylation. Residues C59 and C62 each act as nucleophile in the active site. Cysteines 59 and 62 form a disulfide. N275 is a glycosylation site (N-linked (GlcNAc...) asparagine). A Thioredoxin 2 domain is found at 354–482 (FKDGKIAPHK…FISFVDKNKD (129 aa)). Catalysis depends on nucleophile residues C404 and C407. An intrachain disulfide couples C404 to C407. The Prevents secretion from ER signature appears at 498–501 (KDEL).

Belongs to the protein disulfide isomerase family. In terms of assembly, interacts with RD21A, At3g19390, At5g43060. Highly expressed in flowers, stems and immature seeds, and at lower levels in leaves and siliques (at protein level).

It localises to the endoplasmic reticulum lumen. It is found in the vacuole. It carries out the reaction Catalyzes the rearrangement of -S-S- bonds in proteins.. Its function is as follows. Protein disulfide isomerase that associates with RD21A protease for trafficking from the ER through the Golgi to lytic and protein storage vacuoles of endothelial cells in developing seeds. Regulates the timing of programmed cell death (PCD) of the endothelial cells by chaperoning and inhibiting cysteine proteases during their trafficking to vacuoles. This Arabidopsis thaliana (Mouse-ear cress) protein is Protein disulfide isomerase-like 1-1 (PDIL1-1).